Reading from the N-terminus, the 209-residue chain is Uracil phosphoribosyltransferase (209 aa).

5-phospho-alpha-D-ribose 1-diphosphate is bound by residues Arg79, Arg104, and 131–139 (DPMLATGNS). Uracil contacts are provided by residues Ile194 and 199 to 201 (GDA). Asp200 provides a ligand contact to 5-phospho-alpha-D-ribose 1-diphosphate.

Belongs to the UPRTase family. The cofactor is Mg(2+).

The catalysed reaction is UMP + diphosphate = 5-phospho-alpha-D-ribose 1-diphosphate + uracil. Its pathway is pyrimidine metabolism; UMP biosynthesis via salvage pathway; UMP from uracil: step 1/1. With respect to regulation, allosterically activated by GTP. Its function is as follows. Catalyzes the conversion of uracil and 5-phospho-alpha-D-ribose 1-diphosphate (PRPP) to UMP and diphosphate. In Agrobacterium fabrum (strain C58 / ATCC 33970) (Agrobacterium tumefaciens (strain C58)), this protein is Uracil phosphoribosyltransferase.